Reading from the N-terminus, the 148-residue chain is Insoluble matrix shell protein 1 (148 aa).

The segment at 105–128 (KSGRTEARNTDDSGDPIIDPRTAD) is disordered.

Component of the acid-insoluble organic matrix of the calcified shell.

Its subcellular location is the secreted. This Ruditapes philippinarum (Japanese carpet shell) protein is Insoluble matrix shell protein 1.